A 209-amino-acid chain; its full sequence is Ribosomal RNA large subunit methyltransferase E (209 aa).

5 residues coordinate S-adenosyl-L-methionine: G63, W65, D83, D99, and D124. K164 (proton acceptor) is an active-site residue.

This sequence belongs to the class I-like SAM-binding methyltransferase superfamily. RNA methyltransferase RlmE family.

The protein localises to the cytoplasm. It catalyses the reaction uridine(2552) in 23S rRNA + S-adenosyl-L-methionine = 2'-O-methyluridine(2552) in 23S rRNA + S-adenosyl-L-homocysteine + H(+). Functionally, specifically methylates the uridine in position 2552 of 23S rRNA at the 2'-O position of the ribose in the fully assembled 50S ribosomal subunit. This chain is Ribosomal RNA large subunit methyltransferase E, found in Vibrio campbellii (strain ATCC BAA-1116).